The primary structure comprises 371 residues: Glycosyltransferase 8 domain-containing protein 1 (371 aa).

The Cytoplasmic portion of the chain corresponds to Met1 to His7. A helical; Signal-anchor for type II membrane protein transmembrane segment spans residues Ile8–Gly28. Residues Leu29–Lys371 are Lumenal-facing. 3 N-linked (GlcNAc...) asparagine glycosylation sites follow: Asn104, Asn249, and Asn257.

It belongs to the glycosyltransferase 8 family.

The protein resides in the membrane. This chain is Glycosyltransferase 8 domain-containing protein 1 (glt8d1), found in Xenopus tropicalis (Western clawed frog).